Reading from the N-terminus, the 404-residue chain is Acetate kinase (404 aa).

A Mg(2+)-binding site is contributed by asparagine 7. Lysine 14 is an ATP binding site. Arginine 91 provides a ligand contact to substrate. Aspartate 148 functions as the Proton donor/acceptor in the catalytic mechanism. ATP-binding positions include 208–212 (HLGNG) and 283–285 (DLR). Glutamate 388 is a Mg(2+) binding site.

Belongs to the acetokinase family. As to quaternary structure, homodimer. The cofactor is Mg(2+). Mn(2+) serves as cofactor.

The protein resides in the cytoplasm. It carries out the reaction acetate + ATP = acetyl phosphate + ADP. The protein operates within metabolic intermediate biosynthesis; acetyl-CoA biosynthesis; acetyl-CoA from acetate: step 1/2. Its function is as follows. Catalyzes the formation of acetyl phosphate from acetate and ATP. Can also catalyze the reverse reaction. This is Acetate kinase from Borrelia turicatae (strain 91E135).